Reading from the N-terminus, the 178-residue chain is Large ribosomal subunit protein uL6 (178 aa).

This sequence belongs to the universal ribosomal protein uL6 family. Part of the 50S ribosomal subunit.

This protein binds to the 23S rRNA, and is important in its secondary structure. It is located near the subunit interface in the base of the L7/L12 stalk, and near the tRNA binding site of the peptidyltransferase center. This is Large ribosomal subunit protein uL6 from Streptococcus pneumoniae (strain JJA).